Consider the following 189-residue polypeptide: Ribosome maturation factor RimM (189 aa).

Residues 110 to 189 (DDEYYWKDLI…TVTVDWDPNF (80 aa)) enclose the PRC barrel domain.

It belongs to the RimM family. In terms of assembly, binds ribosomal protein uS19.

The protein resides in the cytoplasm. Its function is as follows. An accessory protein needed during the final step in the assembly of 30S ribosomal subunit, possibly for assembly of the head region. Essential for efficient processing of 16S rRNA. May be needed both before and after RbfA during the maturation of 16S rRNA. It has affinity for free ribosomal 30S subunits but not for 70S ribosomes. The sequence is that of Ribosome maturation factor RimM from Blochmanniella pennsylvanica (strain BPEN).